A 250-amino-acid chain; its full sequence is Global transcriptional regulator CodY (250 aa).

The interval 1-146 is GAF domain; the sequence is MTLLEKTRKL…GATVVGLEIL (146 aa). The H-T-H motif DNA-binding region spans 194 to 213; the sequence is ASKIADKVGITRSVIVNALR.

This sequence belongs to the CodY family.

Its subcellular location is the cytoplasm. In terms of biological role, DNA-binding global transcriptional regulator which is involved in the adaptive response to starvation and acts by directly or indirectly controlling the expression of numerous genes in response to nutrient availability. During rapid exponential growth, CodY is highly active and represses genes whose products allow adaptation to nutrient depletion. This Caldanaerobacter subterraneus subsp. tengcongensis (strain DSM 15242 / JCM 11007 / NBRC 100824 / MB4) (Thermoanaerobacter tengcongensis) protein is Global transcriptional regulator CodY.